A 323-amino-acid chain; its full sequence is Sphingolipid delta(4)-desaturase DES1 (323 aa).

The N-myristoyl glycine moiety is linked to residue Gly-2. The next 2 helical transmembrane spans lie at 41–61 (PNLIWIVTSMLLVQLASFYLV) and 68–88 (WLMFWSYAFGSCLNHSMTLAI). Residues 89–93 (HEISH) carry the Histidine box-1 motif. A helical membrane pass occupies residues 104-124 (WNRWFGMFANLSLGVPYSISF). The short motif at 128–132 (HMDHH) is the Histidine box-2 element. The next 3 helical transmembrane spans lie at 152-172 (FFCTTLRKLVWVILQPLFYAF), 184-204 (HLEVINTVIQVTFDVLVYYVF), and 210-230 (VYMLAASLLGLGLHPISGHFI). A Histidine box-3 motif is present at residues 259–263 (HNEHH). Ser-307 carries the phosphoserine modification.

The protein belongs to the fatty acid desaturase type 1 family. DEGS subfamily. As to quaternary structure, interacts with RLBP1; the interaction increases synthesis of chromophore-precursors by DEGS1. In terms of processing, myristoylation can target the enzyme to the mitochondria leading to an increase in ceramide levels.

The protein localises to the mitochondrion membrane. The protein resides in the endoplasmic reticulum membrane. The enzyme catalyses an N-acylsphinganine + 2 Fe(II)-[cytochrome b5] + O2 + 2 H(+) = an N-acylsphing-4-enine + 2 Fe(III)-[cytochrome b5] + 2 H2O. It carries out the reaction all-trans-retinol = 11-cis-retinol. It catalyses the reaction all-trans-retinol = 9-cis-retinol. The catalysed reaction is all-trans-retinol = 13-cis-retinol. The enzyme catalyses 11-cis-retinol = 13-cis-retinol. It carries out the reaction 11-cis-retinol = 9-cis-retinol. Has sphingolipid-delta-4-desaturase activity. Converts D-erythro-sphinganine to D-erythro-sphingosine (E-sphing-4-enine). Catalyzes the equilibrium isomerization of retinols. This is Sphingolipid delta(4)-desaturase DES1 from Rattus norvegicus (Rat).